Here is a 42-residue protein sequence, read N- to C-terminus: MNNNLLKYLSTIPVVGAIWLTFTAGFIIEINRFFPDILSLSL.

A helical membrane pass occupies residues 8 to 28 (YLSTIPVVGAIWLTFTAGFII).

Belongs to the PsaJ family.

The protein localises to the plastid. Its subcellular location is the chloroplast thylakoid membrane. May help in the organization of the PsaE and PsaF subunits. The sequence is that of Photosystem I reaction center subunit IX from Gracilaria tenuistipitata var. liui (Red alga).